Reading from the N-terminus, the 102-residue chain is NADH-quinone oxidoreductase subunit K (102 aa).

Transmembrane regions (helical) follow at residues 5–25 (LSHF…GIIL), 30–50 (IIVV…NLVS), and 62–82 (VFSL…LAIL).

It belongs to the complex I subunit 4L family. As to quaternary structure, NDH-1 is composed of 14 different subunits. Subunits NuoA, H, J, K, L, M, N constitute the membrane sector of the complex.

It is found in the cell inner membrane. The enzyme catalyses a quinone + NADH + 5 H(+)(in) = a quinol + NAD(+) + 4 H(+)(out). Functionally, NDH-1 shuttles electrons from NADH, via FMN and iron-sulfur (Fe-S) centers, to quinones in the respiratory chain. The immediate electron acceptor for the enzyme in this species is believed to be ubiquinone. Couples the redox reaction to proton translocation (for every two electrons transferred, four hydrogen ions are translocated across the cytoplasmic membrane), and thus conserves the redox energy in a proton gradient. In Methylocella silvestris (strain DSM 15510 / CIP 108128 / LMG 27833 / NCIMB 13906 / BL2), this protein is NADH-quinone oxidoreductase subunit K.